Consider the following 212-residue polypeptide: MPVHEIRHPLIRHKLGLMRRADISTKNFRELAQEVGALLTYEATKDLPLEQYEIPGWAGPVTVEKISGKKITVVPILRAGIGMLDGVLSLIPGAKVSAVGVARNEETLEARTYLEKLAPDIAERRSLIIDPMLATGGSMVATIDLLKKAGSKEIRAMVLVAAPEGIEAVRKAHPDVIIYTASIDEKLDENGYIIPGLGDAGDKIFGTKQKEA.

5-phospho-alpha-D-ribose 1-diphosphate contacts are provided by residues arginine 78, arginine 103, and 130–138 (DPMLATGGS). Uracil contacts are provided by residues isoleucine 193 and 198-200 (GDA). A 5-phospho-alpha-D-ribose 1-diphosphate-binding site is contributed by aspartate 199.

It belongs to the UPRTase family. Mg(2+) serves as cofactor.

The enzyme catalyses UMP + diphosphate = 5-phospho-alpha-D-ribose 1-diphosphate + uracil. It participates in pyrimidine metabolism; UMP biosynthesis via salvage pathway; UMP from uracil: step 1/1. Allosterically activated by GTP. Its function is as follows. Catalyzes the conversion of uracil and 5-phospho-alpha-D-ribose 1-diphosphate (PRPP) to UMP and diphosphate. The chain is Uracil phosphoribosyltransferase from Pseudomonas aeruginosa (strain LESB58).